The chain runs to 172 residues: Protein-export protein SecB (172 aa).

The tract at residues 152–172 is disordered; it reads AQGAEGGNSGIVMPDGSQARH.

Belongs to the SecB family. In terms of assembly, homotetramer, a dimer of dimers. One homotetramer interacts with 1 SecA dimer.

It is found in the cytoplasm. One of the proteins required for the normal export of preproteins out of the cell cytoplasm. It is a molecular chaperone that binds to a subset of precursor proteins, maintaining them in a translocation-competent state. It also specifically binds to its receptor SecA. This chain is Protein-export protein SecB, found in Cupriavidus necator (strain ATCC 17699 / DSM 428 / KCTC 22496 / NCIMB 10442 / H16 / Stanier 337) (Ralstonia eutropha).